The following is a 670-amino-acid chain: Lebercilin-like protein (670 aa).

Positions 24–44 are disordered; the sequence is RRSAECKRSPGTGDFSRNSNA. Coiled coils occupy residues 148 to 259 and 305 to 336; these read LHKI…EREE and AAQTATKTLQVEVKHLQQKLKEKDRELEIKNI. Residues 351-402 are disordered; that stretch reads YPKVSSTKSVQADRKSLPFTSMRHQGTQKSDVAPLTTKGKKATGNMDRKEKS. Residues 368-380 are compositionally biased toward polar residues; that stretch reads PFTSMRHQGTQKS. Residues 420 to 440 adopt a coiled-coil conformation; sequence EDSKTKYEDLSREEKHLEVQV. Disordered stretches follow at residues 495–520, 533–594, and 606–647; these read RSMQRNGMDDTPDKCTAPYTKGPLRQ, LHHG…FRDK, and GYVL…AFGD. A compositionally biased stretch (polar residues) spans 546 to 558; it reads AGNTKYSHSTSKH. Composition is skewed to basic and acidic residues over residues 560 to 572, 585 to 594, and 621 to 632; these read SNREEMELEHSDS, KAKDTTFRDK, and GSEEPLQSKESH. The segment covering 637 to 647 has biased composition (polar residues); it reads SQASASNAFGD.

The protein belongs to the LCA5 family.

The chain is Lebercilin-like protein from Papio anubis (Olive baboon).